Reading from the N-terminus, the 131-residue chain is Global transcriptional regulator Spx 1 (131 aa).

Cysteines 10 and 13 form a disulfide.

The protein belongs to the ArsC family. Spx subfamily. Interacts with the C-terminal domain of the alpha subunit of the RNAP.

The protein resides in the cytoplasm. Global transcriptional regulator that plays a key role in stress response and exerts either positive or negative regulation of genes. Acts by interacting with the C-terminal domain of the alpha subunit of the RNA polymerase (RNAP). This interaction can enhance binding of RNAP to the promoter region of target genes and stimulate their transcription, or block interaction of RNAP with activator. The protein is Global transcriptional regulator Spx 1 of Bacillus anthracis.